The following is a 448-amino-acid chain: Glucose-6-phosphate isomerase (448 aa).

Glu-290 acts as the Proton donor in catalysis. Active-site residues include His-311 and Lys-425.

This sequence belongs to the GPI family.

Its subcellular location is the cytoplasm. The catalysed reaction is alpha-D-glucose 6-phosphate = beta-D-fructose 6-phosphate. It participates in carbohydrate biosynthesis; gluconeogenesis. The protein operates within carbohydrate degradation; glycolysis; D-glyceraldehyde 3-phosphate and glycerone phosphate from D-glucose: step 2/4. Catalyzes the reversible isomerization of glucose-6-phosphate to fructose-6-phosphate. The protein is Glucose-6-phosphate isomerase of Oceanobacillus iheyensis (strain DSM 14371 / CIP 107618 / JCM 11309 / KCTC 3954 / HTE831).